The following is a 311-amino-acid chain: Pyrimidine-specific ribonucleoside hydrolase RihA (311 aa).

His-240 is an active-site residue.

The protein belongs to the IUNH family. RihA subfamily.

Hydrolyzes cytidine or uridine to ribose and cytosine or uracil, respectively. The sequence is that of Pyrimidine-specific ribonucleoside hydrolase RihA from Salmonella schwarzengrund (strain CVM19633).